A 218-amino-acid chain; its full sequence is MGSERTEMRKRQMAATQETPGTAQAQHSVGNRGPNACCFCWCCCCSCSCLTVRNQEEERARRTSHELQAEGIPNCEESPAPTLEEVNAWAQSFDKLMLTPAGRNAFREFLRTEFSEENMLFWMACEELKQESNKSVIEEKARLIYEDYISILSPKEVSLDSRVREVINRNMLEPSQHTFDDAQLQIYTLMHRDSYPRFMNSAIYKDLLRSLSEKSIEA.

The segment covering 1 to 10 (MGSERTEMRK) has biased composition (basic and acidic residues). Residues 1-26 (MGSERTEMRKRQMAATQETPGTAQAQ) form a disordered region. The span at 14–26 (AATQETPGTAQAQ) shows a compositional bias: polar residues. The 117-residue stretch at 92 to 208 (SFDKLMLTPA…MNSAIYKDLL (117 aa)) folds into the RGS domain.

Forms a complex with G(alpha)z/i2 subunits and mu-opioid receptors; the formation of this complex results in mu-opioid receptor desensitization. Interacts with OPRM1. In terms of processing, fatty acylated. Heavily palmitoylated in the cysteine string motif. N- and O-glycosylated in synapsomal membranes. Post-translationally, sumoylated by SUMO1 and SUM02 in synaptosomes. The sumoylated forms act as a scaffold for sequestering mu-opioid receptor-activated G(alpha) subunits.

The protein resides in the membrane. It is found in the nucleus. The protein localises to the cytoplasm. Inhibits signal transduction by increasing the GTPase activity of G protein alpha subunits thereby driving them into their inactive GDP-bound form. Binds selectively to G(z)-alpha and G(alpha)-i2 subunits, accelerates their GTPase activity and regulates their signaling activities. The G(z)-alpha activity is inhibited by the phosphorylation and palmitoylation of the G-protein. Negatively regulates mu-opioid receptor-mediated activation of the G-proteins. The chain is Regulator of G-protein signaling 20 (RGS20) from Gallus gallus (Chicken).